Reading from the N-terminus, the 800-residue chain is Fibroblast growth factor receptor 3 (800 aa).

The signal sequence occupies residues 1-20 (MVPLCLLLYLATLVFPPVYS). The Ig-like C2-type 1 domain maps to 21-122 (AHLLSPEPTD…YTVKVIDSLS (102 aa)). Residues 21–363 (AHLLSPEPTD…EMEREDDYAD (343 aa)) lie on the Extracellular side of the membrane. An intrachain disulfide couples Cys-55 to Cys-101. 3 N-linked (GlcNAc...) asparagine glycosylation sites follow: Asn-77, Asn-90, and Asn-112. Residues 124–136 (GDDEDYDEDEDEA) show a composition bias toward acidic residues. Residues 124–143 (GDDEDYDEDEDEAGNGNAEA) form a disordered region. Ig-like C2-type domains are found at residues 144 to 237 (PYWT…YQLD) and 246 to 348 (PILQ…AWLT). Cys-169 and Cys-221 form a disulfide bridge. Residues Asn-218, Asn-255, Asn-287, Asn-308, and Asn-321 are each glycosylated (N-linked (GlcNAc...) asparagine). Cys-268 and Cys-332 are oxidised to a cystine. A helical membrane pass occupies residues 364-384 (ILIYVTSCVLFILTMVIIILC). Residues 385-800 (RMWINTQKTL…HHHSNGVIRT (416 aa)) lie on the Cytoplasmic side of the membrane. The region spanning 460 to 739 (LTLGKPLGEG…RQLVEDHDRV (280 aa)) is the Protein kinase domain. ATP-binding positions include 466-474 (LGEGCFGQV) and Lys-496. The active-site Proton acceptor is Asp-605. Phosphotyrosine; by autocatalysis is present on residues Tyr-635, Tyr-636, Tyr-712, and Tyr-748. Positions 764–773 (DSNSTCSSGD) are enriched in polar residues. Residues 764 to 800 (DSNSTCSSGDDSVFAHDPLPEEPCLPKHHHSNGVIRT) form a disordered region.

The protein belongs to the protein kinase superfamily. Tyr protein kinase family. Fibroblast growth factor receptor subfamily. In terms of assembly, monomer. Homodimer after ligand binding. Post-translationally, autophosphorylated. Binding of FGF family members together with heparan sulfate proteoglycan or heparin promotes receptor dimerization and autophosphorylation on tyrosine residues. Autophosphorylation occurs in trans between the two FGFR molecules present in the dimer.

The protein resides in the cell membrane. The enzyme catalyses L-tyrosyl-[protein] + ATP = O-phospho-L-tyrosyl-[protein] + ADP + H(+). Its activity is regulated as follows. Present in an inactive conformation in the absence of bound ligand. Ligand binding leads to dimerization and activation by autophosphorylation on tyrosine residues. Its function is as follows. Tyrosine-protein kinase that acts as a cell-surface receptor for fibroblast growth factors and plays an essential role in the regulation of cell proliferation, differentiation and apoptosis. Plays an essential role in the regulation of chondrocyte differentiation, proliferation and apoptosis, and is required for normal skeleton development. Regulates both osteogenesis and postnatal bone mineralization by osteoblasts. Promotes apoptosis in chondrocytes, but can also promote cancer cell proliferation. Phosphorylates PLCG1, CBL and FRS2. Ligand binding leads to the activation of several signaling cascades. Activation of PLCG1 leads to the production of the cellular signaling molecules diacylglycerol and inositol 1,4,5-trisphosphate. Phosphorylation of FRS2 triggers recruitment of GRB2, GAB1, PIK3R1 and SOS1, and mediates activation of RAS, MAPK1/ERK2, MAPK3/ERK1 and the MAP kinase signaling pathway, as well as of the AKT1 signaling pathway. This chain is Fibroblast growth factor receptor 3 (fgfr3), found in Danio rerio (Zebrafish).